The sequence spans 384 residues: Beta-ureidopropionase (384 aa).

The CN hydrolase domain maps to 72–344; the sequence is VHVGLVQNRI…DGLLVAKLDL (273 aa). Glu-119 (proton acceptor) is an active-site residue. The Proton donor role is filled by Lys-196. Residue Cys-233 is the Nucleophile of the active site. Position 378 is a phosphoserine (Ser-378).

Belongs to the carbon-nitrogen hydrolase superfamily. BUP family. As to quaternary structure, homodimer, homotetramer, homooctamer; can also form higher homooligomers.

Its subcellular location is the cytoplasm. The catalysed reaction is 3-(carbamoylamino)propanoate + H2O + 2 H(+) = beta-alanine + NH4(+) + CO2. It catalyses the reaction 3-(carbamoylamino)-2-methylpropanoate + H2O + 2 H(+) = (R)-3-amino-2-methylpropanoate + NH4(+) + CO2. It participates in amino-acid biosynthesis; beta-alanine biosynthesis. In terms of biological role, catalyzes a late step in pyrimidine degradation. Converts N-carbamoyl-beta-alanine (3-ureidopropanoate) into beta-alanine, ammonia and carbon dioxide. Likewise, converts N-carbamoyl-beta-aminoisobutyrate (3-ureidoisobutyrate) into beta-aminoisobutyrate, ammonia and carbon dioxide. The chain is Beta-ureidopropionase (UPB1) from Pongo abelii (Sumatran orangutan).